Reading from the N-terminus, the 367-residue chain is MHFTIQREALLKPLQLVAGVVERRQTLPVLSNVLLVVQGQQLSLTGTDLEVELVGRVQLEEPAEPGEITVPARKLMDICKSLPNDALIDIKVDEQKLLVKAGRSRFTLSTLPANDFPTVEEGPGSLTCNLEQSKLRRLIERTSFAMAQQDVRYYLNGMLLEVSRNTLRAVSTDGHRLALCSMSAPIEQEDRHQVIVPRKGILELARLLTDPEGMVSIVLGQHHIRATTGEFTFTSKLVDGKFPDYERVLPKGGDKLVVGDRQALREAFSRTAILSNEKYRGIRLQLAAGQLKIQANNPEQEEAEEEISVDYEGSSLEIGFNVSYLLDVLGVMTTEQVRLILSDSNSSALLQEAGNDDSSYVVMPMRL.

Belongs to the beta sliding clamp family. In terms of assembly, forms a ring-shaped head-to-tail homodimer around DNA which binds and tethers DNA polymerases and other proteins to the DNA. The DNA replisome complex has a single clamp-loading complex (3 tau and 1 each of delta, delta', psi and chi subunits) which binds 3 Pol III cores (1 core on the leading strand and 2 on the lagging strand) each with a beta sliding clamp dimer. Additional proteins in the replisome are other copies of gamma, psi and chi, Ssb, DNA helicase and RNA primase.

The protein localises to the cytoplasm. Its function is as follows. Confers DNA tethering and processivity to DNA polymerases and other proteins. Acts as a clamp, forming a ring around DNA (a reaction catalyzed by the clamp-loading complex) which diffuses in an ATP-independent manner freely and bidirectionally along dsDNA. Initially characterized for its ability to contact the catalytic subunit of DNA polymerase III (Pol III), a complex, multichain enzyme responsible for most of the replicative synthesis in bacteria; Pol III exhibits 3'-5' exonuclease proofreading activity. The beta chain is required for initiation of replication as well as for processivity of DNA replication. The polypeptide is Beta sliding clamp (dnaN) (Pseudomonas putida (strain ATCC 47054 / DSM 6125 / CFBP 8728 / NCIMB 11950 / KT2440)).